A 366-amino-acid chain; its full sequence is Aminomethyltransferase (366 aa).

Belongs to the GcvT family. The glycine cleavage system is composed of four proteins: P, T, L and H.

It catalyses the reaction N(6)-[(R)-S(8)-aminomethyldihydrolipoyl]-L-lysyl-[protein] + (6S)-5,6,7,8-tetrahydrofolate = N(6)-[(R)-dihydrolipoyl]-L-lysyl-[protein] + (6R)-5,10-methylene-5,6,7,8-tetrahydrofolate + NH4(+). In terms of biological role, the glycine cleavage system catalyzes the degradation of glycine. This chain is Aminomethyltransferase, found in Bacillus velezensis (strain DSM 23117 / BGSC 10A6 / LMG 26770 / FZB42) (Bacillus amyloliquefaciens subsp. plantarum).